The chain runs to 272 residues: NH(3)-dependent NAD(+) synthetase (272 aa).

45–52 (GISGGQDS) contacts ATP. Mg(2+) is bound at residue Asp51. Arg138 is a binding site for deamido-NAD(+). Residue Thr158 participates in ATP binding. A Mg(2+)-binding site is contributed by Glu163. Deamido-NAD(+) contacts are provided by Lys171 and Asp178. Lys187 and Thr209 together coordinate ATP. 258 to 259 (HK) is a binding site for deamido-NAD(+).

Belongs to the NAD synthetase family. In terms of assembly, homodimer.

It catalyses the reaction deamido-NAD(+) + NH4(+) + ATP = AMP + diphosphate + NAD(+) + H(+). Its pathway is cofactor biosynthesis; NAD(+) biosynthesis; NAD(+) from deamido-NAD(+) (ammonia route): step 1/1. In terms of biological role, catalyzes the ATP-dependent amidation of deamido-NAD to form NAD. Uses ammonia as a nitrogen source. This is NH(3)-dependent NAD(+) synthetase from Bacillus cereus (strain ATCC 10987 / NRS 248).